Consider the following 306-residue polypeptide: Non-structural protein 3 (306 aa).

This is Non-structural protein 3 (Segment-7) from Banna virus (BAV).